Consider the following 335-residue polypeptide: Dihydroorotate dehydrogenase (quinone) (335 aa).

FMN contacts are provided by residues 61–65 (AGLDK) and threonine 85. Lysine 65 contacts substrate. A substrate-binding site is contributed by 110–114 (NRMGF). Residues asparagine 138 and asparagine 171 each coordinate FMN. Substrate is bound at residue asparagine 171. Serine 174 functions as the Nucleophile in the catalytic mechanism. Residue asparagine 176 coordinates substrate. FMN is bound by residues lysine 216 and threonine 244. 245–246 (NT) contributes to the substrate binding site. FMN contacts are provided by residues glycine 267, glycine 296, and 317-318 (YS).

The protein belongs to the dihydroorotate dehydrogenase family. Type 2 subfamily. As to quaternary structure, monomer. It depends on FMN as a cofactor.

The protein localises to the cell membrane. The enzyme catalyses (S)-dihydroorotate + a quinone = orotate + a quinol. It participates in pyrimidine metabolism; UMP biosynthesis via de novo pathway; orotate from (S)-dihydroorotate (quinone route): step 1/1. Functionally, catalyzes the conversion of dihydroorotate to orotate with quinone as electron acceptor. This Pseudoalteromonas atlantica (strain T6c / ATCC BAA-1087) protein is Dihydroorotate dehydrogenase (quinone).